Here is a 385-residue protein sequence, read N- to C-terminus: Mannitol-1-phosphate 5-dehydrogenase (385 aa).

4 to 15 serves as a coordination point for NAD(+); it reads AVHFGAGNIGRG.

This sequence belongs to the mannitol dehydrogenase family.

The enzyme catalyses D-mannitol 1-phosphate + NAD(+) = beta-D-fructose 6-phosphate + NADH + H(+). This is Mannitol-1-phosphate 5-dehydrogenase from Lactococcus lactis subsp. lactis (strain IL1403) (Streptococcus lactis).